Here is a 624-residue protein sequence, read N- to C-terminus: MGRPTERRPAAATAAGVEVSVVLPAYNEARTIENTVRVTVETLESFLPADAFEVIVAEDGCDDETPEIADRLAAEDDRIRHYHSDDRLGRGGALERAFEAARGDTLVYFDTDLATDMRHLEELVERVRSGEYDAATGSRWMPDRVADRPRKRGVPSRAYNGLVRLFLRSDLRDHQCGFKAFSREAFEALRDDVEDNHWFWDTEMLVRAQRAGFRVAEFPVDWEPKGDTKVDLVRDILGMGSQILRTWWQLTVRPRITRRVTIVAGLLLTVLALALMTLYIDPSEVISVLGDADPALVAAAAVIYVVSWPLRGIRYREILRELGYREKAGFLTGAIFISQTGNLVFPARAGDAVRAYVVKARRNIPYPSGFASLAVERVFDLLTIAGLAGVVLVGLAATGGLDDIATVLATGVSGGSVDVSADDVRTAAYVATGVGVVAILGVLGIALSARADRNVVRAFVGRFSSDSYVELVAGVIEQFVSDLQAVAGNRAAFGRVGLTSLAIWTVDVVTAVVVLLALGVDIDPVVLVGVSFFAVSVGNLAKVLPLSPGGVGLYEIAFTVFMAALAPVTPAAALAAAVLDHAVKNAVTIVGGVGSMLSLNVSLTTAVEESAEVRDREHELADSK.

Asp201 is an active-site residue. Transmembrane regions (helical) follow at residues 260–280, 285–305, 381–401, 427–447, 496–518, 532–552, 556–576, and 587–607; these read VTIVAGLLLTVLALALMTLYI, VISVLGDADPALVAAAAVIYV, LLTIAGLAGVVLVGLAATGGL, AAYVATGVGVVAILGVLGIAL, VGLTSLAIWTVDVVTAVVVLLAL, FFAVSVGNLAKVLPLSPGGVG, IAFTVFMAALAPVTPAAALAA, and VTIVGGVGSMLSLNVSLTTAV.

It belongs to the glycosyltransferase 2 family.

The protein localises to the cell membrane. Its pathway is cell surface structure biogenesis; S-layer biogenesis. Its function is as follows. Involved in the assembly of a N-linked pentasaccharide that decorates the S-layer glycoprotein and flagellins. Catalyzes the addition of the mannose found at position 5 of the pentasaccharide to its own distinct dolichol phosphate carrier. In Haloferax volcanii (strain ATCC 29605 / DSM 3757 / JCM 8879 / NBRC 14742 / NCIMB 2012 / VKM B-1768 / DS2) (Halobacterium volcanii), this protein is Glycosyltransferase AglD (aglD).